The primary structure comprises 351 residues: Neutral protease 2 homolog MGG_10927 (351 aa).

The N-terminal stretch at 1 to 16 (MKFSIGVSLLATLAGA) is a signal peptide. Residues 17–177 (VNVDMAKRDT…AAFLAKRTIV (161 aa)) constitute a propeptide that is removed on maturation. 2 disulfide bridges follow: C181–C253 and C260–C278. H303 contributes to the Zn(2+) binding site. E304 is an active-site residue. H307 provides a ligand contact to Zn(2+).

This sequence belongs to the peptidase M35 family. Requires Zn(2+) as cofactor.

The protein localises to the secreted. The catalysed reaction is Preferential cleavage of bonds with hydrophobic residues in P1'. Also 3-Asn-|-Gln-4 and 8-Gly-|-Ser-9 bonds in insulin B chain.. Secreted metalloproteinase that allows assimilation of proteinaceous substrates. Shows high activities on basic nuclear substrates such as histone and protamine. The sequence is that of Neutral protease 2 homolog MGG_10927 from Colletotrichum graminicola (strain M1.001 / M2 / FGSC 10212) (Maize anthracnose fungus).